The primary structure comprises 121 residues: MSNEKIIEMIKEMSVLELNDLVKAIEEEFGVTAAAPVAVAGAAGGEGAAAEKTEFDVELVSAGSSKIKVVKAVKEATGLGLKDAKDLVDNAPKVVKEAVSKDEAEELKAKLEEAGATVEVK.

Belongs to the bacterial ribosomal protein bL12 family. In terms of assembly, homodimer. Part of the ribosomal stalk of the 50S ribosomal subunit. Forms a multimeric L10(L12)X complex, where L10 forms an elongated spine to which 2 to 4 L12 dimers bind in a sequential fashion. Binds GTP-bound translation factors.

Its function is as follows. Forms part of the ribosomal stalk which helps the ribosome interact with GTP-bound translation factors. Is thus essential for accurate translation. This Macrococcus caseolyticus (strain JCSC5402) (Macrococcoides caseolyticum) protein is Large ribosomal subunit protein bL12.